The following is a 433-amino-acid chain: Protein root UVB sensitive 2, chloroplastic (433 aa).

This sequence belongs to the RUS1 family. Interacts (via the DUF647 domain) with RUS1 (via the DUF647 domain). As to expression, expressed throughout the plant, with a higher expression near the root apical meristem, in the cortex region of the root elongation zone, in lateral roots and emerging lateral roots. Not detected in extreme root apical meristem or root cap.

The protein localises to the plastid. Involved in a root UV-B sensing pathway and in the protection against the hypersensitivity to very low-fluence-rate (VLF) UV-B. RSU1 and RUS2 are probably both negative modulators of the same UV-B perception pathway, which when overstimulated in the roots causes a block to postgermination development. Required for polar auxin transport and to maintain the normal levels of PIN proteins in the root. This Arabidopsis thaliana (Mouse-ear cress) protein is Protein root UVB sensitive 2, chloroplastic.